We begin with the raw amino-acid sequence, 157 residues long: Heavy metal-associated isoprenylated plant protein 16 (157 aa).

Residues 2-71 (KQKILIRIAM…KVAFAELVSV (70 aa)) enclose the HMA domain. The segment at 73–115 (KVEPPKDGDKKPEEEKKPEEKKPEEKKPEEKKPEPCCQPWQKP) is disordered. The span at 75-106 (EPPKDGDKKPEEEKKPEEKKPEEKKPEEKKPE) shows a compositional bias: basic and acidic residues. Cys-154 carries the post-translational modification Cysteine methyl ester. The S-farnesyl cysteine moiety is linked to residue Cys-154. Residues 155-157 (RIM) constitute a propeptide, removed in mature form.

Belongs to the HIPP family.

Its function is as follows. Probable heavy-metal-binding protein. In Arabidopsis thaliana (Mouse-ear cress), this protein is Heavy metal-associated isoprenylated plant protein 16.